The following is a 443-amino-acid chain: Thymidine phosphorylase (443 aa).

Belongs to the thymidine/pyrimidine-nucleoside phosphorylase family. Homodimer.

It catalyses the reaction thymidine + phosphate = 2-deoxy-alpha-D-ribose 1-phosphate + thymine. The protein operates within pyrimidine metabolism; dTMP biosynthesis via salvage pathway; dTMP from thymine: step 1/2. Functionally, the enzymes which catalyze the reversible phosphorolysis of pyrimidine nucleosides are involved in the degradation of these compounds and in their utilization as carbon and energy sources, or in the rescue of pyrimidine bases for nucleotide synthesis. This is Thymidine phosphorylase from Shewanella sp. (strain ANA-3).